The chain runs to 149 residues: Calmodulin-2 (149 aa).

An N-acetylalanine modification is found at Ala2. EF-hand domains lie at Glu8–Asn43, Pro44–Asp79, Asp81–Lys116, and Leu117–Lys149. The Ca(2+) site is built by Asp21, Asp23, Asp25, Cys27, Glu32, Asp57, Asp59, Asn61, Thr63, Glu68, Asp94, Asp96, Asn98, Tyr100, and Asp105. The residue at position 116 (Lys116) is an N6,N6,N6-trimethyllysine. Asp130, Asp132, Asp134, Gln136, and Glu141 together coordinate Ca(2+).

This sequence belongs to the calmodulin family.

In terms of biological role, calmodulin mediates the control of a large number of enzymes, ion channels and other proteins by Ca(2+). Among the enzymes to be stimulated by the calmodulin-Ca(2+) complex are a number of protein kinases and phosphatases. This is Calmodulin-2 (CAM72) from Petunia hybrida (Petunia).